We begin with the raw amino-acid sequence, 240 residues long: Aliphatic sulfonates import ATP-binding protein SsuB 2 (240 aa).

One can recognise an ABC transporter domain in the interval 2–218 (VRTRELRRGF…RHSAPEFIHA (217 aa)). 34-41 (GRSGSGKS) is an ATP binding site.

Belongs to the ABC transporter superfamily. Aliphatic sulfonates importer (TC 3.A.1.17.2) family. The complex is composed of two ATP-binding proteins (SsuB), two transmembrane proteins (SsuC) and a solute-binding protein (SsuA).

The protein resides in the cell membrane. The catalysed reaction is ATP + H2O + aliphatic sulfonate-[sulfonate-binding protein]Side 1 = ADP + phosphate + aliphatic sulfonateSide 2 + [sulfonate-binding protein]Side 1.. Its function is as follows. Part of the ABC transporter complex SsuABC involved in aliphatic sulfonates import. Responsible for energy coupling to the transport system. This is Aliphatic sulfonates import ATP-binding protein SsuB 2 from Nocardia farcinica (strain IFM 10152).